Here is a 356-residue protein sequence, read N- to C-terminus: MIPDEIKERAYQGTTTKEDALTLLEIEPFELFELADQIRAKAVGDNVTYIVNRNINFTDICIGTCGFCAFKDKKGYLLSIDQIKDKIKEAHVSGATEVCIQGGLLPNVKIDLYIDILKAVKSDYPHIHTHCFSPMEVNHAAKASGLSVEETLKTLKANGLNTMPGTAAEILVDKVRNIICPDKLTRQEWIDTVTLAHKLGIQTTATMMYGHVDTWEDRIEHILTIRRIQKDTGGFSEFVPLSFMPYNNPIGEKMMEEGRFMNTGIDDLKIYAIARILLNTHINNIQTSWVKLGKKLAQMALYCGANDMGGTLMEESISSSAGASSGEAISAEELEWIIRATDRKPVQRDTLYRSIR.

The 235-residue stretch at Val-47–His-281 folds into the Radical SAM core domain. Cys-61, Cys-65, and Cys-68 together coordinate [4Fe-4S] cluster.

It belongs to the radical SAM superfamily. CofH family. As to quaternary structure, consists of two subunits, CofG and CofH. [4Fe-4S] cluster serves as cofactor.

The enzyme catalyses 5-amino-6-(D-ribitylamino)uracil + L-tyrosine + S-adenosyl-L-methionine = 5-amino-5-(4-hydroxybenzyl)-6-(D-ribitylimino)-5,6-dihydrouracil + 2-iminoacetate + 5'-deoxyadenosine + L-methionine + H(+). Its pathway is cofactor biosynthesis; coenzyme F0 biosynthesis. Catalyzes the radical-mediated synthesis of 5-amino-5-(4-hydroxybenzyl)-6-(D-ribitylimino)-5,6-dihydrouracil from 5-amino-6-(D-ribitylamino)uracil and L-tyrosine. This chain is 5-amino-6-(D-ribitylamino)uracil--L-tyrosine 4-hydroxyphenyl transferase, found in Methanococcoides burtonii (strain DSM 6242 / NBRC 107633 / OCM 468 / ACE-M).